A 274-amino-acid polypeptide reads, in one-letter code: Bis(5'-nucleosyl)-tetraphosphatase, symmetrical (274 aa).

This sequence belongs to the Ap4A hydrolase family.

It catalyses the reaction P(1),P(4)-bis(5'-adenosyl) tetraphosphate + H2O = 2 ADP + 2 H(+). Functionally, hydrolyzes diadenosine 5',5'''-P1,P4-tetraphosphate to yield ADP. This chain is Bis(5'-nucleosyl)-tetraphosphatase, symmetrical, found in Shewanella baltica (strain OS155 / ATCC BAA-1091).